Here is a 733-residue protein sequence, read N- to C-terminus: MENMAEEELLPLEKEEVEVAQVQVPTPARDSAGVPAPAPDSALDSAPTPASAPAPAPALAQAPALSPSLASAPEEAKSKRHISIQRQLADLENLAFVTDGNFDSASSLNSDNLDAGNRQACPLCPKEKFRACNSHKLRRHLQNLHWKVSVEFEGYRMCICHLPCRPVKPNIIGEQITSKMGAHYHCIICSATITRRTDMLGHVRRHMNKGETKSSYIAASTAKPPKEILKEADTDVQVCPNYSIPQKTDSYFNPKMKLNRQLIFCTLAALAEERKPLECLDAFGATGIMGLQWAKHLGNAVKVTINDLNENSVTLIQENCHLNKLKVVVDSKEKEKSDDILEEGEKNLGNIKVTKMDANVLMHLRSFDFIHLDPFGTSVNYLDSAFRNIRNLGIVSVTSTDISSLYAKAQHVARRHYGCNIVRTEYYKELAARIVVAAVARAAARCNKGIEVLFAVALEHFVLVVVRVLRGPTSADETAKKIQYLIHCQWCEERIFQKDGNMVEENPYRQLPCNCHGSMPGKTAIELGPLWSSSLFNTGFLKRMLFESLHHGLDDIQTLIKTLIFESECTPQSQFSIHASSNVNKQEENGVFIKTTDDTTTDNYIAQGKRKSNEMITNLGKKQKTDVSTEHPPFYYNIHRHSIKGMNMPKLKKFLCYLSQAGFRVSRTHFDPMGVRTDAPLMQFKSILLKYSTPTYTGGQSESHVQSASEDTVTERVEMSVNDKAEASGCRRW.

Acidic residues predominate over residues 1 to 18; it reads MENMAEEELLPLEKEEVE. Residues 1–78 form a disordered region; it reads MENMAEEELL…LASAPEEAKS (78 aa). Position 26 is a phosphothreonine (T26). Low complexity-rich tracts occupy residues 39-49 and 57-73; these read PDSALDSAPTP and PALA…ASAP. Residue S66 is modified to Phosphoserine. Positions 135 to 139 match the Nucleolar localization signal motif; it reads HKLRR. The C2H2-type zinc-finger motif lies at 184-206; sequence YHCIICSATITRRTDMLGHVRRH. Positions 227-688 constitute a Trm1 methyltransferase domain; that stretch reads EILKEADTDV…APLMQFKSIL (462 aa). The S-adenosyl-L-methionine site is built by R260, D307, D357, and A358. C488, C491, C513, and C515 together coordinate Zn(2+). K585 is covalently cross-linked (Glycyl lysine isopeptide (Lys-Gly) (interchain with G-Cter in SUMO2)). Residues S612 and S707 each carry the phosphoserine modification.

It belongs to the class I-like SAM-binding methyltransferase superfamily. Trm1 family. Widely expressed.

Its subcellular location is the nucleus. The protein localises to the nucleolus. The catalysed reaction is guanosine(27) in tRNA(Tyr) + 2 S-adenosyl-L-methionine = N(2)-dimethylguanosine(27) in tRNA(Tyr) + 2 S-adenosyl-L-homocysteine + 2 H(+). In terms of biological role, specifically dimethylates a single guanine residue at position 27 of tRNA(Tyr) using S-adenosyl-L-methionine as donor of the methyl groups. Dimethylation at position 27 of tRNA(Tyr) is required for efficient translation of tyrosine codons. Also required to maintain 3-(3-amino-3-carboxypropyl)uridine (acp3U) in the D-loop of several cytoplasmic tRNAs. The protein is tRNA (guanine(27)-N(2))-dimethyltransferase of Homo sapiens (Human).